Reading from the N-terminus, the 633-residue chain is General amino acid permease AGP1 (633 aa).

Residues 1–124 (MSSSKSLYEL…SLKKTIQPRH (124 aa)) are Cytoplasmic-facing. Phosphoserine is present on Ser6. Lys11 is covalently cross-linked (Glycyl lysine isopeptide (Lys-Gly) (interchain with G-Cter in ubiquitin)). 2 disordered regions span residues 32-52 (FETGSNDRPSSQPHLGYEQHN) and 86-116 (ISPSSRQAQELEKNESSDNIGANTGHKSDSL). A compositionally biased stretch (polar residues) spans 34-52 (TGSNDRPSSQPHLGYEQHN). A helical membrane pass occupies residues 125-145 (VLMIALGTGIGTGLLVGNGTA). Topologically, residues 146–148 (LVH) are extracellular. The helical transmembrane segment at 149–169 (AGPAGLLIGYAIMGSILYCII) threads the bilayer. The Cytoplasmic segment spans residues 170-197 (QACGEMALVYSNLTGGYNAYPSFLVDDG). The helical transmembrane segment at 198–218 (FGFAVAWVYCLQWLCVCPLEL) threads the bilayer. The Extracellular segment spans residues 219–231 (VTASMTIKYWTTS). The chain crosses the membrane as a helical span at residues 232–252 (VNPDVFVIIFYVLVITINIFG). The Cytoplasmic portion of the chain corresponds to 253–260 (ARGYAEAE). Residues 261-281 (FFFNCCKILMMTGFFILGIII) form a helical membrane-spanning segment. Residues 282 to 313 (DVGGAGNDGFIGGKYWHDPGAFNGKHAIDRFK) are Extracellular-facing. The helical transmembrane segment at 314–334 (GVAATLVTAAFAFGGSEFIAI) threads the bilayer. At 335–352 (TTAEQSNPRKAIPGAAKQ) the chain is on the cytoplasmic side. A helical membrane pass occupies residues 353 to 373 (MIYRILFLFLATIILLGFLVP). Topologically, residues 374–402 (YNSDQLLGSTGGGTKASPYVIAVASHGVR) are extracellular. A helical transmembrane segment spans residues 403–425 (VVPHFINAVILLSVLSMANSSFY). The Cytoplasmic portion of the chain corresponds to 426-452 (SSARLFLTLSEQGYAPKVFSYIDRAGR). A helical membrane pass occupies residues 453–473 (PLIAMGVSALFAVIAFCAASP). The Extracellular segment spans residues 474–477 (KEEQ). The chain crosses the membrane as a helical span at residues 478–498 (VFTWLLAISGLSQLFTWTAIC). Residues 499 to 531 (LSHLRFRRAMKVQGRSLGELGFKSQTGVWGSAY) are Cytoplasmic-facing. A helical membrane pass occupies residues 532-552 (ACIMMILILIAQFWVAIAPIG). Residues 553-560 (EGKLDAQA) are Extracellular-facing. The helical transmembrane segment at 561–581 (FFENYLAMPILIALYVGYKVW) threads the bilayer. Residues 582-633 (HKDWKLFIRADKIDLDSHRQIFDEELIKQEDEEYRERLRNGPYWKRVVAFWC) lie on the Cytoplasmic side of the membrane. Cys633 carries the S-palmitoyl cysteine lipid modification.

The protein belongs to the amino acid-polyamine-organocation (APC) superfamily. YAT (TC 2.A.3.10) family. In terms of processing, palmitoylated by PFA4.

It localises to the cell membrane. In terms of biological role, broad substrate range permease which transports asparagine and glutamine with intermediate specificity. Also transports Ala, Cys, Gly, Ile, Leu, Met, Phe, Ser, Thr, Tyr and Val. Important for the utilization of amino acids as a nitrogen source. This Saccharomyces cerevisiae (strain ATCC 204508 / S288c) (Baker's yeast) protein is General amino acid permease AGP1 (AGP1).